The chain runs to 399 residues: Insertion element IS900 uncharacterized 42 kDa protein (399 aa).

This sequence belongs to the transposase IS1111A/IS1328/IS1533 family.

The sequence is that of Insertion element IS900 uncharacterized 42 kDa protein from Mycobacterium paratuberculosis.